The chain runs to 357 residues: ATP-dependent 6-phosphofructokinase (357 aa).

Residues G12, 80–81 (KG), and 107–110 (GDGS) each bind ATP. Mg(2+) is bound at residue D108. Substrate-binding positions include 131–133 (TID), R168, 175–177 (MGR), E229, R272, and 278–281 (HIQR). D133 serves as the catalytic Proton acceptor.

The protein belongs to the phosphofructokinase type A (PFKA) family. Mixed-substrate PFK group III subfamily. Homodimer or homotetramer. Mg(2+) is required as a cofactor.

It is found in the cytoplasm. It catalyses the reaction beta-D-fructose 6-phosphate + ATP = beta-D-fructose 1,6-bisphosphate + ADP + H(+). Its pathway is carbohydrate degradation; glycolysis; D-glyceraldehyde 3-phosphate and glycerone phosphate from D-glucose: step 3/4. Its activity is regulated as follows. Subject to allosteric activation by ADP and other diphosphonucleosides, and inhibition by phosphoenolpyruvate. Its function is as follows. Catalyzes the phosphorylation of D-fructose 6-phosphate to fructose 1,6-bisphosphate by ATP, the first committing step of glycolysis. This Trichormus variabilis (strain ATCC 29413 / PCC 7937) (Anabaena variabilis) protein is ATP-dependent 6-phosphofructokinase.